The sequence spans 76 residues: DNA-directed RNA polymerase subunit epsilon (76 aa).

Belongs to the RNA polymerase subunit epsilon family. RNAP is composed of a core of 2 alpha, a beta and a beta' subunit. The core is associated with a delta subunit, and at least one of epsilon or omega. When a sigma factor is associated with the core the holoenzyme is formed, which can initiate transcription.

It carries out the reaction RNA(n) + a ribonucleoside 5'-triphosphate = RNA(n+1) + diphosphate. A non-essential component of RNA polymerase (RNAP). This is DNA-directed RNA polymerase subunit epsilon from Streptococcus agalactiae serotype Ia (strain ATCC 27591 / A909 / CDC SS700).